We begin with the raw amino-acid sequence, 197 residues long: MGVNEYLLVGLGNPGREYQDTRHNAGSLLLDDLSSRWSGSNSIEKYNSTFRKARVAGNSLALMQPLTYMNRSGLAVAEYVRFFKIVAENIIVIHDDIDMAPGRVKLVRGGGAGGHNGIKSINSSLGFVDYYRLKIGVGRPGKHGIHPEIPVDKYVLAPFSAEQLDIIVGRYDAIAAGLETFFRDSPAAAATVLNSLR.

Position 18 (Y18) interacts with tRNA. Residue H23 is the Proton acceptor of the active site. Y68, N70, and N116 together coordinate tRNA.

It belongs to the PTH family. In terms of assembly, monomer.

The protein resides in the cytoplasm. It carries out the reaction an N-acyl-L-alpha-aminoacyl-tRNA + H2O = an N-acyl-L-amino acid + a tRNA + H(+). In terms of biological role, hydrolyzes ribosome-free peptidyl-tRNAs (with 1 or more amino acids incorporated), which drop off the ribosome during protein synthesis, or as a result of ribosome stalling. Catalyzes the release of premature peptidyl moieties from peptidyl-tRNA molecules trapped in stalled 50S ribosomal subunits, and thus maintains levels of free tRNAs and 50S ribosomes. This Desulfotalea psychrophila (strain LSv54 / DSM 12343) protein is Peptidyl-tRNA hydrolase.